A 502-amino-acid polypeptide reads, in one-letter code: Aspartyl/glutamyl-tRNA(Asn/Gln) amidotransferase subunit B (502 aa).

This sequence belongs to the GatB/GatE family. GatB subfamily. In terms of assembly, heterotrimer of A, B and C subunits.

The catalysed reaction is L-glutamyl-tRNA(Gln) + L-glutamine + ATP + H2O = L-glutaminyl-tRNA(Gln) + L-glutamate + ADP + phosphate + H(+). It carries out the reaction L-aspartyl-tRNA(Asn) + L-glutamine + ATP + H2O = L-asparaginyl-tRNA(Asn) + L-glutamate + ADP + phosphate + 2 H(+). Functionally, allows the formation of correctly charged Asn-tRNA(Asn) or Gln-tRNA(Gln) through the transamidation of misacylated Asp-tRNA(Asn) or Glu-tRNA(Gln) in organisms which lack either or both of asparaginyl-tRNA or glutaminyl-tRNA synthetases. The reaction takes place in the presence of glutamine and ATP through an activated phospho-Asp-tRNA(Asn) or phospho-Glu-tRNA(Gln). The sequence is that of Aspartyl/glutamyl-tRNA(Asn/Gln) amidotransferase subunit B from Arthrobacter sp. (strain FB24).